We begin with the raw amino-acid sequence, 205 residues long: High frequency lysogenization protein HflD homolog (205 aa).

This sequence belongs to the HflD family.

The protein localises to the cytoplasm. Its subcellular location is the cell inner membrane. The protein is High frequency lysogenization protein HflD homolog of Haemophilus influenzae (strain ATCC 51907 / DSM 11121 / KW20 / Rd).